The following is a 270-amino-acid chain: Mediator of RNA polymerase II transcription subunit 4 (270 aa).

Residues 1 to 22 form a disordered region; that stretch reads MAASSSGEKEKERLGGGLGVAG. Ala2 is modified (N-acetylalanine). Coiled coils occupy residues 24–48 and 90–131; these read NSTR…IEML and HHEM…AKEK. Ser32 is modified (phosphoserine). Residues 226 to 270 are disordered; that stretch reads DMSMNMLPPNHSSDFLLEPPGHNKENEDDVEIMSTDSSSSSSESD. The span at 259–270 shows a compositional bias: low complexity; the sequence is STDSSSSSSESD.

Belongs to the Mediator complex subunit 4 family. As to quaternary structure, component of the Mediator complex, which is composed of MED1, MED4, MED6, MED7, MED8, MED9, MED10, MED11, MED12, MED13, MED13L, MED14, MED15, MED16, MED17, MED18, MED19, MED20, MED21, MED22, MED23, MED24, MED25, MED26, MED27, MED29, MED30, MED31, CCNC, CDK8 and CDC2L6/CDK11. The MED12, MED13, CCNC and CDK8 subunits form a distinct module termed the CDK8 module. Mediator containing the CDK8 module is less active than Mediator lacking this module in supporting transcriptional activation. Individual preparations of the Mediator complex lacking one or more distinct subunits have been variously termed ARC, CRSP, DRIP, PC2, SMCC and TRAP.

Its subcellular location is the nucleus. Component of the Mediator complex, a coactivator involved in the regulated transcription of nearly all RNA polymerase II-dependent genes. Mediator functions as a bridge to convey information from gene-specific regulatory proteins to the basal RNA polymerase II transcription machinery. Mediator is recruited to promoters by direct interactions with regulatory proteins and serves as a scaffold for the assembly of a functional preinitiation complex with RNA polymerase II and the general transcription factors. The polypeptide is Mediator of RNA polymerase II transcription subunit 4 (MED4) (Homo sapiens (Human)).